A 133-amino-acid polypeptide reads, in one-letter code: Ribosome-binding factor A (133 aa).

This sequence belongs to the RbfA family. As to quaternary structure, monomer. Binds 30S ribosomal subunits, but not 50S ribosomal subunits or 70S ribosomes.

The protein localises to the cytoplasm. Functionally, one of several proteins that assist in the late maturation steps of the functional core of the 30S ribosomal subunit. Associates with free 30S ribosomal subunits (but not with 30S subunits that are part of 70S ribosomes or polysomes). Required for efficient processing of 16S rRNA. May interact with the 5'-terminal helix region of 16S rRNA. The sequence is that of Ribosome-binding factor A from Acinetobacter baylyi (strain ATCC 33305 / BD413 / ADP1).